Consider the following 1394-residue polypeptide: MLGWVQRVLPQPPGTPQKTKQEEEGTEPEPELEPKPETAPEETELEEVSLPPEEPCVGKEVAAVTLGPQGTQETALTPPTSLQAQVSVAPEAHSSPRGWVLTWLRKGVEKVVPQPAHSSRPSQNIAAGLESPDQQAGAQILGQCGTGGSDEPSEPSRAEDPGPGPWLLRWFEQNLEKMLPQPPKISEGWRDEPTDAALGPEPPGPALEIKPMLQAQESPSLPAPGPPEPEEEPIPEPQPTIQASSLPPPQDSARLMAWILHRLEMALPQPVIRGKGGEQESDAPVTCDVQTISILPGEQEESHLILEEVDPHWEEDEHQEGSTSTSPRTSEAAPADEEKGKVVEQTPRELPRIQEEKEDEEEEKEDGEEEEEEGREKEEEEGEEKEEEEGREKEEEEGEKKEEEGREKEEEEGGEKEDEEGREKEEEEGRGKEEEEGGEKEEEEGRGKEEVEGREEEEDEEEEQDHSVLLDSYLVPQSEEDRSEESETQDQSEVGGAQAQGEVGGAQALSEESETQDQSEVGGAQDQSEVGGAQAQGEVGGAQEQDGVGGAQDQSTSHQELQEEALADSSGVPATEEHPELQVEDADADSRPLIAEENPPSPVQLPLSPAKSDTLAVPGSATGSLRKRLPSQDDEAEELKMLSPAASPVVAWSDPTSPQGTDDQDRATSTASQNSAIINDRLQELVKLFKERTEKVKEKLIDPDVTSDEESPKPSPAKKAPEPAPEVKPAEAGQVEEEHYCEMLCCKFKRRPWKKYQFPQSIDPLTNLMYILWLFFVVLAWNWNCWLIPVRWAFPYQTPDNIHLWLLMDYLCDLIYLLDITVFQMRLQFVRGGDIITDKKEMRNNYVKSQRFKMDMLCLLPLDLLYLKFGVNPLLRLPRCLKYMAFFEFNNRLESILSKAYVYRVIRTTAYLLYSLHLNSCLYYWASAYEGLGSTHWVYDGVGNSYIRCYYWAVKTLITIGGLPDPRTLFEIVFQGLNYFTGVFAFSVMIGQMRDVVGAATAGQTYYRSCMDSTVKYMNFYKIPRSVQNRVKTWYEYTWHSQGMLDESELMVQLPDKMRLDLAIDVNYSIVSKVALFQGCDRQMIFDMLKRLRSVVYLPNDYVCKKGEIGREMYIIQAGQVQVLGGPDGKSVLVTLKAGSVFGEISLLAVGGGNRRTANVVAHGFTNLFILDKKDLNEILVHYPESQKLLRKKARRMLRNNNKPKEKSVLILPPRAGTPKLFNAALAAAGKMGAKGGRGGRLALLRARLKELAALEAAARQQQLLEQAKSSEDAAVGEEGSASPEQPPRPEPPAPEAPAPEPTAPEPLAPEAPAPEAPAPSSPPPASQERPEGDKDAARPEEHPVRIHVTLGPDPSEQILLVEVPEKQEEKEKKEEETEEKEEGEEARKEKEEE.

Disordered regions lie at residues methionine 1–serine 95, valine 112–alanine 253, and valine 271–serine 675. At methionine 1–isoleucine 762 the chain is on the cytoplasmic side. Composition is skewed to polar residues over residues proline 68–valine 86 and alanine 116–isoleucine 125. 2 stretches are compositionally biased toward basic and acidic residues: residues glutamate 300–histidine 312 and aspartate 336–glutamate 355. Positions glutamate 356 to glutamate 387 are enriched in acidic residues. The span at glutamate 388–lysine 408 shows a compositional bias: basic and acidic residues. Residues glutamate 409 to aspartate 418 are compositionally biased toward acidic residues. Positions glutamate 419–glutamate 433 are enriched in basic and acidic residues. Composition is skewed to acidic residues over residues glutamate 452–glutamine 464 and aspartate 481–aspartate 490. 2 stretches are compositionally biased toward low complexity: residues glutamate 493 to alanine 508 and glutamate 529 to glutamine 554. A compositionally biased stretch (polar residues) spans aspartate 654–serine 675. Residues alanine 671 to arginine 681 are calmodulin-binding CaM1. Residues leucine 682 to arginine 692 carry the IQ-like motif. The interval lysine 699–alanine 732 is disordered. Residues aspartate 763–alanine 793 form a helical membrane-spanning segment. Topologically, residues phenylalanine 794–threonine 798 are extracellular. A helical transmembrane segment spans residues proline 799–methionine 825. Over arginine 826–threonine 837 the chain is Cytoplasmic. Residues aspartate 838–proline 861 traverse the membrane as a helical segment. The Extracellular portion of the chain corresponds to leucine 862 to asparagine 872. The chain crosses the membrane as a helical span at residues proline 873 to phenylalanine 887. Residues glutamate 888 to alanine 900 are Cytoplasmic-facing. The interval alanine 900–alanine 999 is ion conduction pathway. Residues tyrosine 901–leucine 922 traverse the membrane as a helical segment. The Extracellular portion of the chain corresponds to tyrosine 923 to glycine 931. 2 helical membrane passes run leucine 932–phenylalanine 974 and glutamine 975–alanine 1002. Residues threonine 959–glycine 962 are selectivity filter. Residues glycine 1003–glutamate 1394 are Cytoplasmic-facing. Residues arginine 1082 to leucine 1198 are cyclic nucleotide-binding domain. 3',5'-cyclic GMP contacts are provided by glycine 1143, glutamate 1144, serine 1146, arginine 1156, and threonine 1157. Residue arginine 1156 coordinates 3',5'-cyclic AMP. Positions glutamine 1261 to glutamine 1267 are calmodulin-binding CaM2. Residues leucine 1265 to glutamate 1394 form a disordered region. Pro residues predominate over residues glutamate 1285–alanine 1326. Composition is skewed to basic and acidic residues over residues glutamate 1329–valine 1345 and valine 1364–glutamate 1376.

The protein belongs to the cyclic nucleotide-gated cation channel (TC 1.A.1.5) family. CNGB1 subfamily. In terms of assembly, the rod cyclic nucleotide-gated channel is a heterotetramer composed of CNGA1 and CNGB1 subunits with 3:1 stoichiometry. CNGA1:CNGB1 channel binds Ca(2+)-bound CALM1 via CaM1 and CaM2 regions of the CNGB1 subunit; this interaction modulates the affinity of the channel for cNMPs in response to intracellular Ca(2+) levels. The olfactory cyclic nucleotide-gated channel is a heterotetramer composed of CNGA2, CNGA4 and CNGB1 subunits with 2:1:1 stoichiometry. As to expression, retina, testis, kidney, heart and brain.

Its subcellular location is the membrane. The enzyme catalyses Ca(2+)(in) = Ca(2+)(out). The catalysed reaction is Na(+)(in) = Na(+)(out). It catalyses the reaction K(+)(in) = K(+)(out). It carries out the reaction NH4(+)(in) = NH4(+)(out). The enzyme catalyses Rb(+)(in) = Rb(+)(out). The catalysed reaction is Li(+)(in) = Li(+)(out). It catalyses the reaction Cs(+)(in) = Cs(+)(out). Functionally, pore-forming subunit of the rod cyclic nucleotide-gated channel. Mediates rod photoresponses at dim light converting transient changes in intracellular cGMP levels into electrical signals. In the dark, cGMP levels are high and keep the channel open enabling a steady inward current carried by Na(+) and Ca(2+) ions that leads to membrane depolarization and neurotransmitter release from synaptic terminals. Upon photon absorption cGMP levels decline leading to channel closure and membrane hyperpolarization that ultimately slows neurotransmitter release and signals the presence of light, the end point of the phototransduction cascade. Pore-forming subunit of the olfactory cyclic nucleotide-gated channel. Operates in the cilia of olfactory sensory neurons where chemical stimulation of the odorant is converted to an electrical signal. Mediates odorant-induced cAMP-dependent Ca(2+) influx triggering neuron depolarization. The rise of intracellular Ca(2+) levels potentiates the olfactory response by activating Ca(2+)-dependent Cl(-) channels, but it also serves as a negative feedback signal to desensitize the channel for rapid adaptation to odorants. Conducts cGMP- and cAMP-gated ion currents, with permeability for monovalent and divalent cations. The selectivity for Ca(2+) over Na(+) increases with cGMP concentrations, whereas the selectivity among monovalent ions is independent of the cGMP levels. This Bos taurus (Bovine) protein is Cyclic nucleotide-gated channel beta-1.